The chain runs to 213 residues: Kiwellin (213 aa).

The first 24 residues, 1–24 (MAQLSLLVLSLFLTLISLPPPGAS), serve as a signal peptide directing secretion. 3 cysteine pairs are disulfide-bonded: C28–C60, C32–C44, and C38–C49. A 4-hydroxyproline mark is found at P65 and P67. Intrachain disulfides connect C72–C90, C80–C172, C119–C144, and C166–C182. The tract at residues 91 to 121 (SPPVTSSTPAKLTNNDFSEGGDGGGPSECDE) is disordered. Residues 93–107 (PVTSSTPAKLTNNDF) show a composition bias toward polar residues.

Belongs to the kiwellin family. In terms of processing, undergoes proteolytic cleavage by actinidin to produce kissper and KiTH. Three forms of KiTH are produced by cleavage at different sites.

The protein resides in the secreted. Functionally, kissper is an anion-selective pore-forming peptide. This is Kiwellin from Actinidia chinensis var. chinensis (Chinese soft-hair kiwi).